The following is a 397-amino-acid chain: UPF0597 protein Tmel_1007 (397 aa).

Belongs to the UPF0597 family.

The protein is UPF0597 protein Tmel_1007 of Thermosipho melanesiensis (strain DSM 12029 / CIP 104789 / BI429).